We begin with the raw amino-acid sequence, 182 residues long: MFKYIGDIVKGTGTQLRSLVMVFGHGFRKRDTLQYPEEQVYLPPRYRGRIVLTRDPDGEERCVACNLCAVACPVGCISLQKAETEDGRWYPDFFRINFSRCIFCGLCEEACPTTAIQLTPDFEMAEFKRQDLVYEKEDLLISGPGKNPDYNFYRVAGMAVAGKPKGAAQNEAEPINVKSLLP.

4Fe-4S ferredoxin-type domains are found at residues 52-82 and 92-121; these read LTRDPDGEERCVACNLCAVACPVGCISLQKA and DFFRINFSRCIFCGLCEEACPTTAIQLTPD. Residues Cys-62, Cys-65, Cys-68, Cys-72, Cys-101, Cys-104, Cys-107, and Cys-111 each coordinate [4Fe-4S] cluster.

This sequence belongs to the complex I 23 kDa subunit family. In terms of assembly, NDH-1 is composed of 13 different subunits. Subunits NuoA, H, J, K, L, M, N constitute the membrane sector of the complex. It depends on [4Fe-4S] cluster as a cofactor.

It localises to the cell inner membrane. The enzyme catalyses a quinone + NADH + 5 H(+)(in) = a quinol + NAD(+) + 4 H(+)(out). Functionally, NDH-1 shuttles electrons from NADH, via FMN and iron-sulfur (Fe-S) centers, to quinones in the respiratory chain. The immediate electron acceptor for the enzyme in this species is believed to be ubiquinone. Couples the redox reaction to proton translocation (for every two electrons transferred, four hydrogen ions are translocated across the cytoplasmic membrane), and thus conserves the redox energy in a proton gradient. This Pseudomonas fluorescens (strain Pf0-1) protein is NADH-quinone oxidoreductase subunit I.